The sequence spans 167 residues: MASAEPLTALSRWYLYAIHGYFCEVMFTAAWEFVVNFNWKFPGVTSVWALFIYGTSILIVERMYLRLRGRCPLLLRCLIYTLWTYLWEFTTGFILRQFNACPWDYSQFDFDFMGLITLEYAVPWFCGALLVEQFVIRNTLRLRFDKDAEPGEPSGALALANGHVKTD.

At 1 to 14 (MASAEPLTALSRWY) the chain is on the cytoplasmic side. Residues 15 to 35 (LYAIHGYFCEVMFTAAWEFVV) traverse the membrane as a helical segment. Over 36 to 40 (NFNWK) the chain is Extracellular. A helical membrane pass occupies residues 41–61 (FPGVTSVWALFIYGTSILIVE). Residues 62–73 (RMYLRLRGRCPL) are Cytoplasmic-facing. A helical transmembrane segment spans residues 74-94 (LLRCLIYTLWTYLWEFTTGFI). Residues 95–111 (LRQFNACPWDYSQFDFD) lie on the Extracellular side of the membrane. A helical membrane pass occupies residues 112–132 (FMGLITLEYAVPWFCGALLVE). Residues 133-167 (QFVIRNTLRLRFDKDAEPGEPSGALALANGHVKTD) are Cytoplasmic-facing.

This sequence belongs to the TMEM229 family.

The protein resides in the membrane. This Bos taurus (Bovine) protein is Transmembrane protein 229B (TMEM229B).